A 178-amino-acid polypeptide reads, in one-letter code: Bifunctional protein PyrR (178 aa).

The PRPP-binding signature appears at 99–111 (IILVDDVLFTGRT).

The protein belongs to the purine/pyrimidine phosphoribosyltransferase family. PyrR subfamily. Homodimer and homohexamer; in equilibrium.

The catalysed reaction is UMP + diphosphate = 5-phospho-alpha-D-ribose 1-diphosphate + uracil. Its function is as follows. Regulates transcriptional attenuation of the pyrimidine nucleotide (pyr) operon by binding in a uridine-dependent manner to specific sites on pyr mRNA. This disrupts an antiterminator hairpin in the RNA and favors formation of a downstream transcription terminator, leading to a reduced expression of downstream genes. Functionally, also displays a weak uracil phosphoribosyltransferase activity which is not physiologically significant. This is Bifunctional protein PyrR from Clostridium novyi (strain NT).